Consider the following 210-residue polypeptide: Synaptosomal-associated protein 23 (210 aa).

An N-acetylmethionine modification is found at methionine 1. Phosphoserine is present on residues serine 5, serine 20, serine 23, and serine 34. Residues histidine 14–leucine 76 form the t-SNARE coiled-coil homology 1 domain. The stretch at serine 23–leucine 76 forms a coiled coil. S-palmitoyl cysteine attachment occurs at residues cysteine 79, cysteine 80, cysteine 83, cysteine 85, and cysteine 87. A disordered region spans residues glycine 104–glycine 136. The span at serine 109 to alanine 133 shows a compositional bias: polar residues. Residues serine 110 and serine 160 each carry the phosphoserine modification. In terms of domain architecture, t-SNARE coiled-coil homology 2 spans aspartate 145–leucine 207.

Belongs to the SNAP-25 family. As to quaternary structure, homotetramer (via coiled-coil domain), also forms heterotetramers with STX4 and VAMP3. Found in a complex with VAMP8 and STX1A. Found in a complex with VAMP8 and STX4 in pancreas. Interacts simultaneously with SNAPIN and SYN4. Interacts with STX1A. Interacts with STX12. Interacts tightly to multiple syntaxins and synaptobrevins/VAMPs. Interacts with ZDHHC13 (via ANK repeats). Interacts with ZDHHC17 (via ANK repeats).

Its subcellular location is the cell membrane. It localises to the synapse. The protein localises to the synaptosome. It is found in the cytoplasmic vesicle membrane. In terms of biological role, essential component of the high affinity receptor for the general membrane fusion machinery and an important regulator of transport vesicle docking and fusion. This chain is Synaptosomal-associated protein 23 (Snap23), found in Rattus norvegicus (Rat).